We begin with the raw amino-acid sequence, 302 residues long: GTPase Era (302 aa).

Residues 9-177 enclose the Era-type G domain; sequence YCGFIAIVGR…EKIVRQSLRE (169 aa). The interval 17-24 is G1; that stretch reads GRPNVGKS. GTP is bound at residue 17–24; it reads GRPNVGKS. Residues 43–47 form a G2 region; it reads QTTRH. The G3 stretch occupies residues 64–67; sequence DTPG. Residues 64-68 and 126-129 each bind GTP; these read DTPGL and NKVD. A G4 region spans residues 126 to 129; that stretch reads NKVD. The G5 stretch occupies residues 156-158; the sequence is ISA. Residues 208–285 form the KH type-2 domain; the sequence is TGEELPYSVT…HLELWVKVKS (78 aa).

Belongs to the TRAFAC class TrmE-Era-EngA-EngB-Septin-like GTPase superfamily. Era GTPase family. As to quaternary structure, monomer.

The protein resides in the cytoplasm. The protein localises to the cell inner membrane. An essential GTPase that binds both GDP and GTP, with rapid nucleotide exchange. Plays a role in 16S rRNA processing and 30S ribosomal subunit biogenesis and possibly also in cell cycle regulation and energy metabolism. This chain is GTPase Era, found in Haemophilus influenzae (strain PittGG).